A 67-amino-acid chain; its full sequence is DNA gyrase inhibitor YacG (67 aa).

Residues C9, C12, C28, and C32 each contribute to the Zn(2+) site. The interval 48–67 is disordered; the sequence is PVSPDAEDELFSEELPPRAH.

It belongs to the DNA gyrase inhibitor YacG family. In terms of assembly, interacts with GyrB. Zn(2+) serves as cofactor.

In terms of biological role, inhibits all the catalytic activities of DNA gyrase by preventing its interaction with DNA. Acts by binding directly to the C-terminal domain of GyrB, which probably disrupts DNA binding by the gyrase. This is DNA gyrase inhibitor YacG from Pseudomonas fluorescens (strain ATCC BAA-477 / NRRL B-23932 / Pf-5).